A 167-amino-acid polypeptide reads, in one-letter code: Cytochrome b6-f complex subunit 4 (167 aa).

A run of 3 helical transmembrane segments spans residues 36–56, 95–115, and 131–151; these read LLYISPVVILGTIACNVGLAV, LLGVLLMVLVPTGLLTVPFLE, and TVFLIGTAVALWLGIGATLPI.

This sequence belongs to the cytochrome b family. PetD subfamily. In terms of assembly, the 4 large subunits of the cytochrome b6-f complex are cytochrome b6, subunit IV (17 kDa polypeptide, petD), cytochrome f and the Rieske protein, while the 4 small subunits are petG, petL, petM and petN. The complex functions as a dimer.

Its subcellular location is the plastid. It is found in the chloroplast thylakoid membrane. In terms of biological role, component of the cytochrome b6-f complex, which mediates electron transfer between photosystem II (PSII) and photosystem I (PSI), cyclic electron flow around PSI, and state transitions. This Calycanthus floridus var. glaucus (Eastern sweetshrub) protein is Cytochrome b6-f complex subunit 4.